A 436-amino-acid polypeptide reads, in one-letter code: GTPase Der (436 aa).

EngA-type G domains lie at Pro-4–Glu-167 and Ile-175–Asn-351. GTP contacts are provided by residues Gly-10–Ser-17, Asp-57–Ile-61, Asn-119–Asp-122, Gly-181–Ser-188, Asp-229–Met-233, and Asn-294–Asp-297. The KH-like domain occupies Thr-352–Lys-436.

The protein belongs to the TRAFAC class TrmE-Era-EngA-EngB-Septin-like GTPase superfamily. EngA (Der) GTPase family. Associates with the 50S ribosomal subunit.

Its function is as follows. GTPase that plays an essential role in the late steps of ribosome biogenesis. In Streptococcus gordonii (strain Challis / ATCC 35105 / BCRC 15272 / CH1 / DL1 / V288), this protein is GTPase Der.